We begin with the raw amino-acid sequence, 89 residues long: Aminoacyl carrier protein 2 (89 aa).

The region spanning 6–84 is the Carrier domain; sequence INVQNRVLSV…AMERMILNQL (79 aa). Ser42 is modified (O-(pantetheine 4'-phosphoryl)serine).

4'-phosphopantetheine is transferred from CoA to a specific serine of the apo-form of this carrier protein.

Functionally, aminoacyl carrier protein. Can be charged with L-glycine via the formation of a thioester bond between the amino acid and the 4'-phosphopantetheinyl prosthetic group, catalyzed by the bll6282 ligase. The chain is Aminoacyl carrier protein 2 from Bradyrhizobium diazoefficiens (strain JCM 10833 / BCRC 13528 / IAM 13628 / NBRC 14792 / USDA 110).